The following is a 43-amino-acid chain: Seed non-specific lipid transfer protein-like (43 aa).

It belongs to the plant LTP family. As to quaternary structure, homodimer.

Plant non-specific lipid-transfer proteins transfer phospholipids as well as galactolipids across membranes. May play a role in wax or cutin deposition in the cell walls of expanding epidermal cells and certain secretory tissues. This isoform inhibits the hyphal growth of several fungi in vitro. The polypeptide is Seed non-specific lipid transfer protein-like (Raphanus sativus (Radish)).